The sequence spans 974 residues: Kinesin-like protein KIN-7A (974 aa).

Positions 1–29 (MTIKTPGTPVSKMDRTPAVTPGGSSRSRE) are disordered. Residues 31-353 (KIVVTVRLRP…LYFANRAKEV (323 aa)) form the Kinesin motor domain. 117-124 (GQTSSGKT) contributes to the ATP binding site. Coiled-coil stretches lie at residues 362 to 435 (VVSD…KGLN) and 565 to 603 (SANLKEEITRLHSQGSTIANLEEQLESVQKSIDKLVMSL). Disordered regions lie at residues 605–649 (SNIS…PCSP) and 663–713 (NKAP…SSVN). The segment covering 616 to 628 (TKNHHHQSKKKKL) has biased composition (basic residues). 2 stretches are compositionally biased toward polar residues: residues 638–649 (NRQNFLKSPCSP) and 666–682 (PQENNSSAARGATTPQG). Residues 683–693 (SEKETPQKGEE) are compositionally biased toward basic and acidic residues.

The protein belongs to the TRAFAC class myosin-kinesin ATPase superfamily. Kinesin family. KIN-7 subfamily. In terms of processing, phosphorylated at Thr-145, Thr-687 and Thr-703 by CDKAs and CDKBs. Phosphorylated NACK1 fails to mediate cytokinesis. Expressed in roots, flowers, pollen mother cells and embryos.

It is found in the cytoplasm. Its subcellular location is the cytoskeleton. The protein localises to the phragmoplast. Functionally, probable plus end-directed motor protein that functions in the NACK-PQR (ANP1-MKK6-MPK4) MAP kinase signaling pathway, which is essential for somatic cell cytokinesis, especially for the cell-plate formation and its expansion. Regulates the activity and the localization of ANP1, probably by association through the non-catalytic region of the kinase. Functionally redundant with NACK2 and essential to promote the progression of cytokinesis and for cellularization (formation of the cell plate) during microgametogenesis and megagametogenesis. The chain is Kinesin-like protein KIN-7A from Arabidopsis thaliana (Mouse-ear cress).